The sequence spans 390 residues: tRNA(Met) cytidine acetate ligase (390 aa).

Residues 7 to 20, Gly101, Asn162, and Arg187 each bind ATP; that span reads VVEY…HKLH.

It belongs to the TmcAL family.

Its subcellular location is the cytoplasm. It catalyses the reaction cytidine(34) in elongator tRNA(Met) + acetate + ATP = N(4)-acetylcytidine(34) in elongator tRNA(Met) + AMP + diphosphate. Functionally, catalyzes the formation of N(4)-acetylcytidine (ac(4)C) at the wobble position of elongator tRNA(Met), using acetate and ATP as substrates. First activates an acetate ion to form acetyladenylate (Ac-AMP) and then transfers the acetyl group to tRNA to form ac(4)C34. The chain is tRNA(Met) cytidine acetate ligase from Listeria monocytogenes serotype 4b (strain CLIP80459).